The sequence spans 216 residues: Ephrin-A1 (216 aa).

Positions 1–28 are cleaved as a signal peptide; the sequence is MMELYRAAVQLIVGVGLGVGLWLREAQG. An Ephrin RBD domain is found at 29–161; the sequence is ERHIVFWNSS…RLRVHVSGRT (133 aa). The N-linked (GlcNAc...) asparagine glycan is linked to Asn36. A disulfide bond links Cys61 and Cys102. Residues 162–181 form a disordered region; that stretch reads TPPPVNVHTPRSHIQSDEPE. Ser195 is lipidated: GPI-anchor amidated serine. Positions 196-216 are cleaved as a propeptide — removed in mature form; that stretch reads AAPGTPCTLYGLLLAALLLRL.

The protein belongs to the ephrin family. As to quaternary structure, binds to the receptor tyrosine kinases EPHA2, EPHA4, EPHA5, EPHA6 and EPHA7. Also binds with low affinity to EPHA1.

The protein resides in the membrane. Cell surface GPI-bound ligand for Eph receptors, a family of receptor tyrosine kinases which are crucial for migration, repulsion and adhesion during neuronal, vascular and epithelial development. Binds promiscuously Eph receptors residing on adjacent cells, leading to contact-dependent bidirectional signaling into neighboring cells. The protein is Ephrin-A1 (efna1) of Xenopus laevis (African clawed frog).